Here is a 224-residue protein sequence, read N- to C-terminus: MLLTIPELLDAAQLAEIRRLLADAPFTDGRYSAGADARRVKHNEEVDPSDTRVRALNQLVLMPLYRHETFQAAALPRKLSGAFFARYLPGMQYGAHVDDPVMGPEGGRYRTDVSVTVFIGEPQSYEGGELVVETDFGEQQVKLPAGHAVIYPSSSLHRVSPVTGGERLVAVAWAESMVRDPARRQMLYELYQVHEALRRDNPDAEVTRRAGHVRANLMRMWADV.

One can recognise a Fe2OG dioxygenase domain in the interval 78-176 (KLSGAFFARY…RLVAVAWAES (99 aa)). His-96, Asp-98, and His-157 together coordinate Fe cation. Position 167 (Arg-167) interacts with 2-oxoglutarate.

Fe(2+) is required as a cofactor. Requires L-ascorbate as cofactor.

In Thioalkalivibrio sulfidiphilus (strain HL-EbGR7), this protein is PKHD-type hydroxylase Tgr7_2199.